Consider the following 501-residue polypeptide: Arabinose import ATP-binding protein AraG (501 aa).

ABC transporter domains are found at residues 4–239 (LEFN…MVGR) and 252–495 (LGDN…LPDK). 36–43 (GENGAGKS) provides a ligand contact to ATP.

Belongs to the ABC transporter superfamily. Arabinose importer (TC 3.A.1.2.2) family. In terms of assembly, the complex is composed of two ATP-binding proteins (AraG), two transmembrane proteins (AraH) and a solute-binding protein (AraF).

It localises to the cell inner membrane. It carries out the reaction L-arabinose(out) + ATP + H2O = L-arabinose(in) + ADP + phosphate + H(+). In terms of biological role, part of the ABC transporter complex AraFGH involved in arabinose import. Responsible for energy coupling to the transport system. This chain is Arabinose import ATP-binding protein AraG, found in Rhizobium etli (strain ATCC 51251 / DSM 11541 / JCM 21823 / NBRC 15573 / CFN 42).